The chain runs to 416 residues: Enterobactin exporter EntS (416 aa).

The Cytoplasmic segment spans residues 1-21 (MNKQSWLLNLSLLKTHPAFRA). The chain crosses the membrane as a helical span at residues 22–42 (VFLARFISIVSLGLLGVAVPV). Topologically, residues 43-55 (QIQMMTHSTWQVG) are periplasmic. The helical transmembrane segment at 56–76 (LSVTLTGGAMFVGLMVGGVLA) threads the bilayer. Residues 77 to 83 (DRYERKK) lie on the Cytoplasmic side of the membrane. Residues 84-104 (VILLARGTCGIGFIGLCLNAL) form a helical membrane-spanning segment. Residues 105-109 (LPEPS) lie on the Periplasmic side of the membrane. Residues 110–130 (LLAIYLLGLWDGFFASLGVTA) form a helical membrane-spanning segment. Over 131–156 (LLAATPALVGRENLMQAGAITMLTVR) the chain is Cytoplasmic. The helical transmembrane segment at 157–177 (LGSVISPMIGGLLLATGGVAW) threads the bilayer. Residue N178 is a topological domain, periplasmic. The chain crosses the membrane as a helical span at residues 179–199 (YGLAAAGTFITLLPLLSLPAL). Residues 200 to 218 (PPPPQPREHPLKSLLAGFR) are Cytoplasmic-facing. The helical transmembrane segment at 219–239 (FLLASPLVGGIALLGGLLTMA) threads the bilayer. The Periplasmic segment spans residues 240–256 (SAVRVLYPALADNWQMS). The chain crosses the membrane as a helical span at residues 257–277 (AAQIGFLYAAIPLGAAIGALT). The Cytoplasmic portion of the chain corresponds to 278–287 (SGKLAHSVRP). The helical transmembrane segment at 288-307 (GLLMLLSTLGAFLAIGLFGL) threads the bilayer. The Periplasmic segment spans residues 308-313 (MPMWIL). A helical transmembrane segment spans residues 314 to 336 (GVVCLALFGWLSAVSSLLQYTML). The Cytoplasmic segment spans residues 337-356 (QTQTPEAMLGRINGLWTAQN). A helical transmembrane segment spans residues 357–377 (VTGDAIGAALLGGLGAMMTPV). Position 378 (A378) is a topological domain, periplasmic. The helical transmembrane segment at 379–399 (SASASGFGLLIIGVLLLLVLV) threads the bilayer. The Cytoplasmic segment spans residues 400-416 (ELRRFRQTPPQVTASGS).

This sequence belongs to the major facilitator superfamily. EntS (TC 2.A.1.38) family.

It localises to the cell inner membrane. Functionally, component of an export pathway for enterobactin. The protein is Enterobactin exporter EntS of Escherichia coli O6:K15:H31 (strain 536 / UPEC).